Here is a 593-residue protein sequence, read N- to C-terminus: Vitamin H transporter (593 aa).

Over 1–121 (MTISNKSWRS…TTQTKAERRL (121 aa)) the chain is Extracellular. Residues Ser32, Ser33, and Ser43 each carry the phosphoserine modification. Residues 122–142 (LYKLDIIIALYFFMLCWSKSV) form a helical membrane-spanning segment. Topologically, residues 143–166 (DLNNYTNAYVSNMKEDLNMKGNDY) are cytoplasmic. Residues 167–187 (VYTSTIANVGAIVFQLPFMYL) form a helical membrane-spanning segment. Over 188-190 (LPR) the chain is Extracellular. The chain crosses the membrane as a helical span at residues 191 to 211 (FPSHIILPVMDLGWTWFTFAC). Residues 212–224 (YRANSLAELRAYR) lie on the Cytoplasmic side of the membrane. Residues 225–245 (FILSAFGAAYYPVSQYILGCW) form a helical membrane-spanning segment. Over 246-291 (YAPDEINSRVCLFFCGQQLGSVTSGLLQSRIFKSLNGVHGLAGWRW) the chain is Extracellular. The helical transmembrane segment at 292 to 312 (MFLIDAIAISLPTAIIGFFVI) threads the bilayer. At 313–361 (PGVPSKCYSLFLTDEEIRIARARNKRNQIKDGVDKSKLAPLWSRKLWKK) the chain is on the cytoplasmic side. The helical transmembrane segment at 362–382 (VFCTPAFWVLVVFDTCSWNNM) threads the bilayer. Over 383-408 (TAYSGSYTLWLKSNTKYSIAQVNNLS) the chain is Extracellular. The helical transmembrane segment at 409-429 (VIPACLGFAYVIFCAFGADLF) threads the bilayer. Over 430–432 (RCK) the chain is Cytoplasmic. Residues 433–453 (WIFMVFAAIMNTVSCALLIKW) traverse the membrane as a helical segment. Residues 454–460 (DIPSKAK) lie on the Extracellular side of the membrane. A helical transmembrane segment spans residues 461–481 (WYAFFTTYFSVAASPCLWSFI). Over 482-492 (NDFLRFDPQVK) the chain is Cytoplasmic. A helical transmembrane segment spans residues 493 to 513 (AITWIAIYSFSQSTYAWIPTL). Residues 514-526 (AWPTVESPRFKTG) are Extracellular-facing. Residues 527-547 (YTVSLIFGAIYGLWTFVVLFF) form a helical membrane-spanning segment. At 548–593 (YKRNEKKHALGNGIILYDSNKGEELPEFVKKNMEERDGYYYLKRSS) the chain is on the cytoplasmic side.

The protein belongs to the major facilitator superfamily. Allantoate permease family.

The protein localises to the cell membrane. Its function is as follows. Involved in uptake of biotin with the concomitant entry of protons. This chain is Vitamin H transporter (VHT1), found in Saccharomyces cerevisiae (strain ATCC 204508 / S288c) (Baker's yeast).